We begin with the raw amino-acid sequence, 148 residues long: Macrodomain Ter protein (148 aa).

The protein belongs to the MatP family. Homodimer.

The protein resides in the cytoplasm. Its function is as follows. Required for spatial organization of the terminus region of the chromosome (Ter macrodomain) during the cell cycle. Prevents early segregation of duplicated Ter macrodomains during cell division. Binds specifically to matS, which is a 13 bp signature motif repeated within the Ter macrodomain. The protein is Macrodomain Ter protein of Haemophilus ducreyi (strain 35000HP / ATCC 700724).